Reading from the N-terminus, the 242-residue chain is MYPDNFYSSTFTLLAEAEVGKHFYWDIAGFLVHGQVLVVVWFVLALLLLFAVLGTRDIDRIPNSWQNFAESAVDFVTDIARDQLGESFYREWVPFIGTLFLFIFGCNWAGAIIPWKLIELPEGELAAPTNDINTTVALALLTSLAYFYAGLSKKGFGYFKRYIQPIPLLLPINILEDFTKPLSLSFRLFGNVLADELTITVLTSLVPLVIPLPIMALGIFAGSVQALIFSTLAAAYIAEALE.

The next 5 membrane-spanning stretches (helical) occupy residues 34–54 (GQVL…AVLG), 93–113 (VPFI…GAII), 132–152 (INTT…AGLS), 188–210 (LFGN…PLVI), and 222–242 (GSVQ…EALE).

The protein belongs to the ATPase A chain family. F-type ATPases have 2 components, CF(1) - the catalytic core - and CF(0) - the membrane proton channel. CF(1) has five subunits: alpha(3), beta(3), gamma(1), delta(1), epsilon(1). CF(0) has four main subunits: a, b, b' and c.

Its subcellular location is the plastid. It is found in the chloroplast thylakoid membrane. Its function is as follows. Key component of the proton channel; it plays a direct role in the translocation of protons across the membrane. The sequence is that of ATP synthase subunit a, chloroplastic from Trieres chinensis (Marine centric diatom).